The primary structure comprises 107 residues: Ribonuclease P protein component 4 (107 aa).

Zn(2+)-binding residues include Cys66, Cys69, Cys92, and Cys95.

This sequence belongs to the eukaryotic/archaeal RNase P protein component 4 family. As to quaternary structure, consists of a catalytic RNA component and at least 4-5 protein subunits. Requires Zn(2+) as cofactor.

The protein resides in the cytoplasm. The enzyme catalyses Endonucleolytic cleavage of RNA, removing 5'-extranucleotides from tRNA precursor.. In terms of biological role, part of ribonuclease P, a protein complex that generates mature tRNA molecules by cleaving their 5'-ends. This is Ribonuclease P protein component 4 from Methanosarcina mazei (strain ATCC BAA-159 / DSM 3647 / Goe1 / Go1 / JCM 11833 / OCM 88) (Methanosarcina frisia).